A 1393-amino-acid chain; its full sequence is DNA glycosylase/AP lyase ROS1 (1393 aa).

Disordered stretches follow at residues 1–25 (MEKQRREESSFQQPPWIPQTPMKPF), 98–186 (SLSS…TSTR), and 237–265 (LSAPSTPKRKRSQGKRKGVQPKKNGSNLE). Residues 98-108 (SLSSVSNNVAE) show a composition bias toward low complexity. Positions 117–126 (PKRKKHRPKV) are enriched in basic residues. 2 stretches are compositionally biased toward basic and acidic residues: residues 127–138 (RREAKPKREPKP) and 162–171 (KKVEVSKDQD). Over residues 243-256 (PKRKRSQGKRKGVQ) the composition is skewed to basic residues. Residues 528 to 626 (KVDLDDETDR…AFMSLASQFP (99 aa)) are DEMETER. The segment covering 653–672 (EETMSSPPDHNHSSVTLKNT) has biased composition (polar residues). Disordered stretches follow at residues 653–722 (EETM…SVEV) and 789–830 (SNQV…CSQQ). Over residues 687 to 698 (SRSSSEIAISAH) the composition is skewed to low complexity. The segment covering 699 to 722 (ESVDKTTDSKEYVDSDRKGSSVEV) has biased composition (basic and acidic residues). The segment covering 816–830 (KSSVDSSEPGCCSQQ) has biased composition (polar residues). Residue K901 forms a Glycyl lysine isopeptide (Lys-Gly) (interchain with G-Cter in ubiquitin) linkage. [4Fe-4S] cluster is bound by residues C1038, C1045, C1048, and C1054.

This sequence belongs to the DNA glycosylase family. DEMETER subfamily. In terms of assembly, interacts (via the central region) with ZDP. Binds to RPA2A. Interacts with XRCC1. Interacts probably with a complex made of MBD7, IDM1, IDM2 and IDM3. Interacts with APE1L. [4Fe-4S] cluster is required as a cofactor. Expressed ubiquitously in both vegetative and reproductive organs.

Its subcellular location is the nucleus. It is found in the nucleolus. It carries out the reaction 2'-deoxyribonucleotide-(2'-deoxyribose 5'-phosphate)-2'-deoxyribonucleotide-DNA = a 3'-end 2'-deoxyribonucleotide-(2,3-dehydro-2,3-deoxyribose 5'-phosphate)-DNA + a 5'-end 5'-phospho-2'-deoxyribonucleoside-DNA + H(+). Its activity is regulated as follows. Stimulated by ZDP. Stimulated by XRCC1. Its function is as follows. Bifunctional DNA glycosylase/lyase, which excises 5-methylcytosine (5-meC) and 5-hydroxymethylcytosine (5-hmeC), leaving an apyrimidinic (AP) site that is subsequently incised by the lyase activity. Generates 3'-phosphor-alpha,beta-unsaturated aldehyde (3'-PUA) as a primary 5-meC excision intermediate. Prevents DNA hypermethylation, specifically in the promoter of otherwise silenced loci. May be involved in DNA repair through its nicking activity on methylated DNA. Binds with similar affinity to both methylated and non-methylated DNA. Highly distributive behavior on DNA substrates containing multiple 5-meC residues. Involved with Pol IV in the remodeling of the 5S rDNA chromatin via DNA methylation modifications during the first days of development post-germination. Participates in UV-B induced- and oxidative DNA damage repair. The polypeptide is DNA glycosylase/AP lyase ROS1 (Arabidopsis thaliana (Mouse-ear cress)).